The following is a 1242-amino-acid chain: DNA-directed RNA polymerase RPB2 homolog (1242 aa).

The segment at 1180–1201 (CRNCGEPAIYNASHPIYKCMNC) adopts a C4-type zinc-finger fold.

It belongs to the RNA polymerase beta chain family. Part of the viral DNA-directed RNA polymerase that consists of 8 polII-like subunits (RPB1, RPB2, RPB3, RPB5, RPB6, RPB7, RPB9, RPB10), a capping enzyme and a termination factor.

The protein localises to the host cytoplasm. It localises to the virion. It catalyses the reaction RNA(n) + a ribonucleoside 5'-triphosphate = RNA(n+1) + diphosphate. In terms of biological role, catalytic component of the DNA-directed RNA polymerase (RNAP) that catalyzes the transcription in the cytoplasm of viral DNA into RNA using the four ribonucleoside triphosphates as substrates. Forms the polymerase active center together with RPB1. Part of the core element with the central large cleft, the clamp element that moves to open and close the cleft and the jaws that are thought to grab the incoming DNA template. The polypeptide is DNA-directed RNA polymerase RPB2 homolog (Ornithodoros (relapsing fever ticks)).